A 105-amino-acid chain; its full sequence is Heat shock protein HspQ (105 aa).

Residues 75–105 (SELQDEHPEQPSMDELAQTIRKQLQAPRLRN) are disordered.

Belongs to the HspQ family.

It is found in the cytoplasm. Functionally, involved in the degradation of certain denaturated proteins, including DnaA, during heat shock stress. The chain is Heat shock protein HspQ from Escherichia coli O127:H6 (strain E2348/69 / EPEC).